The sequence spans 201 residues: MSGSSEQELKMMVRSLNLESGFLGTFDCRFPGFISKDRRQTAIVNTGPREQGGVHWIALAWDPTSRKMFLFDPLGWTNAELKKYYGFSYQNMVQRSALSSADRCVTLERNTQAVQCTCAGSCGLFCILFLYCAHLSPSNPFGTSLFQSLDGQKSGMVPRSPEALHKNQQILYNFLSSKCAYFRKNARNIVMNTRLHLIKTH.

Residues H55, D72, and C122 contribute to the active site.

It belongs to the peptidase C5 family. Interacts with protease cofactor pVI-C; this interaction is necessary for protease activation.

Its subcellular location is the virion. The protein localises to the host nucleus. The enzyme catalyses Cleaves proteins of the adenovirus and its host cell at two consensus sites: -Yaa-Xaa-Gly-Gly-|-Xaa- and -Yaa-Xaa-Gly-Xaa-|-Gly- (in which Yaa is Met, Ile or Leu, and Xaa is any amino acid).. Its activity is regulated as follows. Requires DNA and protease cofactor for maximal activation. Inside nascent virions, becomes partially activated by binding to the viral DNA, allowing it to cleave the cofactor that binds to the protease and fully activates it. Actin, like the viral protease cofactor, seems to act as a cofactor in the cleavage of cytokeratin 18 and of actin itself. Its function is as follows. Cleaves viral precursor proteins (pTP, pIIIa, pVI, pVII, pVIII, and pX) inside newly assembled particles giving rise to mature virions. Protease complexed to its cofactor slides along the viral DNA to specifically locate and cleave the viral precursors. Mature virions have a weakened organization compared to the unmature virions, thereby facilitating subsequent uncoating. Without maturation, the particle lacks infectivity and is unable to uncoat. Late in adenovirus infection, in the cytoplasm, may participate in the cytoskeleton destruction. Cleaves host cell cytoskeletal keratins K7 and K18. This Pantherophis guttatus (Corn snake) protein is Protease.